A 346-amino-acid chain; its full sequence is uncharacterized protein (346 aa).

The signal sequence occupies residues 1–27 (MKFNKISLSVSTALLAAGLAVSGSANA).

This is an uncharacterized protein from Haemophilus influenzae (strain ATCC 51907 / DSM 11121 / KW20 / Rd).